The chain runs to 425 residues: 3-phosphoshikimate 1-carboxyvinyltransferase (425 aa).

3 residues coordinate 3-phosphoshikimate: Lys20, Ser21, and Arg25. Residue Lys20 participates in phosphoenolpyruvate binding. Phosphoenolpyruvate-binding residues include Gly92 and Arg120. 3-phosphoshikimate is bound by residues Ser165, Gln167, Asp312, and Lys339. Gln167 is a binding site for phosphoenolpyruvate. The active-site Proton acceptor is the Asp312. Positions 343 and 385 each coordinate phosphoenolpyruvate.

Belongs to the EPSP synthase family. As to quaternary structure, monomer.

It localises to the cytoplasm. It catalyses the reaction 3-phosphoshikimate + phosphoenolpyruvate = 5-O-(1-carboxyvinyl)-3-phosphoshikimate + phosphate. It functions in the pathway metabolic intermediate biosynthesis; chorismate biosynthesis; chorismate from D-erythrose 4-phosphate and phosphoenolpyruvate: step 6/7. Functionally, catalyzes the transfer of the enolpyruvyl moiety of phosphoenolpyruvate (PEP) to the 5-hydroxyl of shikimate-3-phosphate (S3P) to produce enolpyruvyl shikimate-3-phosphate and inorganic phosphate. The sequence is that of 3-phosphoshikimate 1-carboxyvinyltransferase from Alkaliphilus metalliredigens (strain QYMF).